The chain runs to 463 residues: ATP-dependent protease ATPase subunit HslU (463 aa).

Residues isoleucine 19, 61-66 (GVGKTE), aspartate 277, glutamate 341, and arginine 413 each bind ATP.

The protein belongs to the ClpX chaperone family. HslU subfamily. As to quaternary structure, a double ring-shaped homohexamer of HslV is capped on each side by a ring-shaped HslU homohexamer. The assembly of the HslU/HslV complex is dependent on binding of ATP.

The protein resides in the cytoplasm. Functionally, ATPase subunit of a proteasome-like degradation complex; this subunit has chaperone activity. The binding of ATP and its subsequent hydrolysis by HslU are essential for unfolding of protein substrates subsequently hydrolyzed by HslV. HslU recognizes the N-terminal part of its protein substrates and unfolds these before they are guided to HslV for hydrolysis. The polypeptide is ATP-dependent protease ATPase subunit HslU (Bacillus cereus (strain 03BB102)).